A 993-amino-acid chain; its full sequence is Protein translocase subunit SecA (993 aa).

Residues glutamine 102, 120–124 (GEGKT), and aspartate 523 each bind ATP. The interval 910-962 (ENAPEPQISGGNGQQPPQRRQQTSLDDLEKQFERKKKRELEQARMAGGGMPDA) is disordered. Residues 936–951 (DLEKQFERKKKRELEQ) show a composition bias toward basic and acidic residues. Zn(2+) is bound by residues cysteine 979, cysteine 981, cysteine 990, and histidine 991.

This sequence belongs to the SecA family. Monomer and homodimer. Part of the essential Sec protein translocation apparatus which comprises SecA, SecYEG and auxiliary proteins SecDF. Other proteins may also be involved. The cofactor is Zn(2+).

The protein localises to the cell inner membrane. It is found in the cytoplasm. It catalyses the reaction ATP + H2O + cellular proteinSide 1 = ADP + phosphate + cellular proteinSide 2.. In terms of biological role, part of the Sec protein translocase complex. Interacts with the SecYEG preprotein conducting channel. Has a central role in coupling the hydrolysis of ATP to the transfer of proteins into and across the cell membrane, serving as an ATP-driven molecular motor driving the stepwise translocation of polypeptide chains across the membrane. The chain is Protein translocase subunit SecA from Koribacter versatilis (strain Ellin345).